Consider the following 518-residue polypeptide: ATP synthase subunit alpha (518 aa).

169-176 (GDRQTGKT) contacts ATP.

The protein belongs to the ATPase alpha/beta chains family. As to quaternary structure, F-type ATPases have 2 components, CF(1) - the catalytic core - and CF(0) - the membrane proton channel. CF(1) has five subunits: alpha(3), beta(3), gamma(1), delta(1), epsilon(1). CF(0) has three main subunits: a(1), b(2) and c(9-12). The alpha and beta chains form an alternating ring which encloses part of the gamma chain. CF(1) is attached to CF(0) by a central stalk formed by the gamma and epsilon chains, while a peripheral stalk is formed by the delta and b chains.

Its subcellular location is the cell membrane. The enzyme catalyses ATP + H2O + 4 H(+)(in) = ADP + phosphate + 5 H(+)(out). Its function is as follows. Produces ATP from ADP in the presence of a proton gradient across the membrane. The alpha chain is a regulatory subunit. The chain is ATP synthase subunit alpha from Mycoplasma genitalium (strain ATCC 33530 / DSM 19775 / NCTC 10195 / G37) (Mycoplasmoides genitalium).